A 131-amino-acid polypeptide reads, in one-letter code: Aspartate 1-decarboxylase (131 aa).

Residue serine 25 is the Schiff-base intermediate with substrate; via pyruvic acid of the active site. Serine 25 carries the pyruvic acid (Ser) modification. Residue threonine 57 coordinates substrate. Tyrosine 58 serves as the catalytic Proton donor. 73–75 (GAA) contributes to the substrate binding site. The segment at 112–131 (NVPTTQKSENPGQGSLRNAI) is disordered. Residues 113–131 (VPTTQKSENPGQGSLRNAI) show a composition bias toward polar residues.

This sequence belongs to the PanD family. As to quaternary structure, heterooctamer of four alpha and four beta subunits. Requires pyruvate as cofactor. Is synthesized initially as an inactive proenzyme, which is activated by self-cleavage at a specific serine bond to produce a beta-subunit with a hydroxyl group at its C-terminus and an alpha-subunit with a pyruvoyl group at its N-terminus.

The protein resides in the cytoplasm. The enzyme catalyses L-aspartate + H(+) = beta-alanine + CO2. It functions in the pathway cofactor biosynthesis; (R)-pantothenate biosynthesis; beta-alanine from L-aspartate: step 1/1. Catalyzes the pyruvoyl-dependent decarboxylation of aspartate to produce beta-alanine. The protein is Aspartate 1-decarboxylase of Syntrophotalea carbinolica (strain DSM 2380 / NBRC 103641 / GraBd1) (Pelobacter carbinolicus).